Consider the following 405-residue polypeptide: Type II secretion system protein F (405 aa).

Residues 1-168 lie on the Cytoplasmic side of the membrane; sequence MAAFEYLALD…QRQQSRQKIQ (168 aa). Positions 97, 151, and 155 each coordinate Ca(2+). Residues 169–189 traverse the membrane as a helical segment; sequence LALLYPVILMVASLAIVGFLL. Residues 190–219 lie on the Periplasmic side of the membrane; sequence GYVVPDVVRVFIDSGQTLPLLTRVLIGVSD. The helical transmembrane segment at 220–239 threads the bilayer; that stretch reads WVKAWGALAFVAAIGGVIGF. At 240 to 376 the chain is on the cytoplasmic side; the sequence is RYALRKDAFR…IGLMVGLFEP (137 aa). Residues 377-397 traverse the membrane as a helical segment; sequence FMLIFMGAVVLVIVLAILLPI. The Periplasmic portion of the chain corresponds to 398 to 405; it reads LSLNQLVG.

It belongs to the GSP F family. In terms of assembly, type II secretion system is composed of four main components: the outer membrane complex, the inner membrane complex, the cytoplasmic secretion ATPase and the periplasm-spanning pseudopilus. Homodimer. Interacts with XcpR/GspE and XcpY/GspL components.

The protein localises to the cell inner membrane. Functionally, component of the type II secretion system inner membrane complex required for the energy-dependent secretion of extracellular factors such as proteases and toxins from the periplasm. In Pseudomonas aeruginosa (strain ATCC 15692 / DSM 22644 / CIP 104116 / JCM 14847 / LMG 12228 / 1C / PRS 101 / PAO1), this protein is Type II secretion system protein F (xcpS).